The chain runs to 295 residues: Pyridoxal 5'-phosphate synthase subunit PdxS (295 aa).

Residue D25 coordinates D-ribose 5-phosphate. K82 serves as the catalytic Schiff-base intermediate with D-ribose 5-phosphate. G154 contributes to the D-ribose 5-phosphate binding site. R166 contacts D-glyceraldehyde 3-phosphate. D-ribose 5-phosphate is bound by residues G215 and 236 to 237 (GS).

The protein belongs to the PdxS/SNZ family. In terms of assembly, in the presence of PdxT, forms a dodecamer of heterodimers.

It catalyses the reaction aldehydo-D-ribose 5-phosphate + D-glyceraldehyde 3-phosphate + L-glutamine = pyridoxal 5'-phosphate + L-glutamate + phosphate + 3 H2O + H(+). It functions in the pathway cofactor biosynthesis; pyridoxal 5'-phosphate biosynthesis. Functionally, catalyzes the formation of pyridoxal 5'-phosphate from ribose 5-phosphate (RBP), glyceraldehyde 3-phosphate (G3P) and ammonia. The ammonia is provided by the PdxT subunit. Can also use ribulose 5-phosphate and dihydroxyacetone phosphate as substrates, resulting from enzyme-catalyzed isomerization of RBP and G3P, respectively. The sequence is that of Pyridoxal 5'-phosphate synthase subunit PdxS from Staphylococcus epidermidis (strain ATCC 35984 / DSM 28319 / BCRC 17069 / CCUG 31568 / BM 3577 / RP62A).